Consider the following 881-residue polypeptide: Fanconi anemia core complex-associated protein 100 (881 aa).

The interval 94-119 (GRSRSTSQDDRDSEDGDQPSPVIPVD) is disordered. Phosphoserine is present on serine 667.

As to quaternary structure, belongs to the multisubunit FA complex composed of FANCA, FANCB, FANCC, FANCE, FANCF, FANCG, FANCL/PHF9, FANCM, FAAP24 and FAAP100. Forms a subcomplex with FANCB and FANCL.

Its subcellular location is the nucleus. In terms of biological role, plays a role in Fanconi anemia-associated DNA damage response network. Regulates FANCD2 monoubiquitination and the stability of the FA core complex. Induces chromosomal instability as well as hypersensitivity to DNA cross-linking agents, when repressed. This is Fanconi anemia core complex-associated protein 100 from Homo sapiens (Human).